The sequence spans 118 residues: Large ribosomal subunit protein bL19 (118 aa).

This sequence belongs to the bacterial ribosomal protein bL19 family.

This protein is located at the 30S-50S ribosomal subunit interface and may play a role in the structure and function of the aminoacyl-tRNA binding site. In Beutenbergia cavernae (strain ATCC BAA-8 / DSM 12333 / CCUG 43141 / JCM 11478 / NBRC 16432 / NCIMB 13614 / HKI 0122), this protein is Large ribosomal subunit protein bL19.